We begin with the raw amino-acid sequence, 207 residues long: Small ribosomal subunit protein uS4 (207 aa).

Positions Lys-33–Asn-54 are disordered. Polar residues predominate over residues Gly-42–Gly-53. Residues Ser-97 to Leu-160 form the S4 RNA-binding domain.

This sequence belongs to the universal ribosomal protein uS4 family. As to quaternary structure, part of the 30S ribosomal subunit. Contacts protein S5. The interaction surface between S4 and S5 is involved in control of translational fidelity.

In terms of biological role, one of the primary rRNA binding proteins, it binds directly to 16S rRNA where it nucleates assembly of the body of the 30S subunit. Its function is as follows. With S5 and S12 plays an important role in translational accuracy. In Cupriavidus pinatubonensis (strain JMP 134 / LMG 1197) (Cupriavidus necator (strain JMP 134)), this protein is Small ribosomal subunit protein uS4.